The sequence spans 87 residues: Cell division topological specificity factor (87 aa).

It belongs to the MinE family.

Functionally, prevents the cell division inhibition by proteins MinC and MinD at internal division sites while permitting inhibition at polar sites. This ensures cell division at the proper site by restricting the formation of a division septum at the midpoint of the long axis of the cell. The protein is Cell division topological specificity factor of Chelativorans sp. (strain BNC1).